A 469-amino-acid chain; its full sequence is Aspartyl/glutamyl-tRNA(Asn/Gln) amidotransferase subunit B (469 aa).

Belongs to the GatB/GatE family. GatB subfamily. In terms of assembly, heterotrimer of A, B and C subunits.

The enzyme catalyses L-glutamyl-tRNA(Gln) + L-glutamine + ATP + H2O = L-glutaminyl-tRNA(Gln) + L-glutamate + ADP + phosphate + H(+). It carries out the reaction L-aspartyl-tRNA(Asn) + L-glutamine + ATP + H2O = L-asparaginyl-tRNA(Asn) + L-glutamate + ADP + phosphate + 2 H(+). Allows the formation of correctly charged Asn-tRNA(Asn) or Gln-tRNA(Gln) through the transamidation of misacylated Asp-tRNA(Asn) or Glu-tRNA(Gln) in organisms which lack either or both of asparaginyl-tRNA or glutaminyl-tRNA synthetases. The reaction takes place in the presence of glutamine and ATP through an activated phospho-Asp-tRNA(Asn) or phospho-Glu-tRNA(Gln). This Thermus thermophilus (strain ATCC 27634 / DSM 579 / HB8) protein is Aspartyl/glutamyl-tRNA(Asn/Gln) amidotransferase subunit B.